The primary structure comprises 1023 residues: Sodium/potassium-transporting ATPase subunit alpha-1 (1023 aa).

A propeptide spanning residues 1 to 5 (MGKGV) is cleaved from the precursor. The segment covering 1–11 (MGKGVGRDKYE) has biased composition (basic and acidic residues). The disordered stretch occupies residues 1 to 38 (MGKGVGRDKYEPAAVSEHGDKKGKKAKKERDMDELKKE). The Cytoplasmic portion of the chain corresponds to 6–87 (GRDKYEPAAV…NALTPPPTTP (82 aa)). Lys9 carries the post-translational modification N6-acetyllysine. Position 10 is a phosphotyrosine (Tyr10). Ser16 carries the phosphoserine; by PKC modification. Residue Lys21 is modified to N6-acetyllysine. Residues 28–38 (KERDMDELKKE) show a composition bias toward basic and acidic residues. A phosphoserine mark is found at Ser40 and Ser47. The phosphoinositide-3 kinase binding stretch occupies residues 82-84 (PPP). Residues 88 to 108 (EWVKFCRQLFGGFSMLLWIGA) traverse the membrane as a helical segment. The Extracellular segment spans residues 109–131 (ILCFLAYGILAATEEDFDNDNLY). Residues 132–152 (LGVVLAAVVIITGCFSYYQEA) traverse the membrane as a helical segment. Topologically, residues 153–288 (KSSKIMESFK…GGQTPIAAEI (136 aa)) are cytoplasmic. The interval 216–235 (SSLTGESEPQTRSPDFTNEN) is disordered. The residue at position 228 (Ser228) is a Phosphoserine. Tyr260 carries the phosphotyrosine modification. The helical transmembrane segment at 289 to 308 (EHFIHIITGVAVFLGVSFFI) threads the bilayer. Residues 309 to 320 (LSLILEYTWLEA) are Extracellular-facing. Residues 321–338 (VIFLIGIIVANVPEGLLA) form a helical membrane-spanning segment. Topologically, residues 339–772 (TVTVCLTLTA…EEGRLIFDNL (434 aa)) are cytoplasmic. Asp376 (4-aspartylphosphate intermediate) is an active-site residue. Residues Ser452 and Ser484 each carry the phosphoserine modification. Lys487 is a binding site for ATP. A Phosphotyrosine modification is found at Tyr542. The segment at 596–717 (RAAVPDAVGK…QGAIVAVTGD (122 aa)) is mediates interaction with SCN7A. Lys661 carries the N6-succinyllysine modification. 2 positions are modified to phosphoserine: Ser668 and Ser675. Residues Asp717 and Asp721 each coordinate Mg(2+). A helical membrane pass occupies residues 773-792 (KKSIAYTLTSNIPEITPFLI). At 793 to 802 (FIIANIPLPL) the chain is on the extracellular side. The helical transmembrane segment at 803–823 (GTVTILCIDLGTDMVPAISLA) threads the bilayer. The Cytoplasmic segment spans residues 824 to 843 (YEQAESDIMKRQPRNPKTDK). Residues 844-866 (LVNERLISMAYGQIGMIQALGGF) form a helical membrane-spanning segment. At 867 to 918 (FTYFVILAENGFLPFHLLGIRVDWDDRWINDVEDSYGQQWTYEQRKIVEFTC) the chain is on the extracellular side. Residues 919 to 938 (HTAFFVSIVVVQWADLVICK) traverse the membrane as a helical segment. Residues 939-951 (TRRNSVFQQGMKN) are Cytoplasmic-facing. Ser943 is subject to Phosphoserine; by PKA. Residues 952–970 (KILIFGLFEETALAAFLSY) form a helical membrane-spanning segment. Residues 971 to 985 (CPGMGVALRMYPLKP) lie on the Extracellular side of the membrane. The helical transmembrane segment at 986–1006 (TWWFCAFPYSLLIFVYDEIRK) threads the bilayer. The Cytoplasmic portion of the chain corresponds to 1007 to 1023 (LIIRRRPGGWVEKETYY).

The protein belongs to the cation transport ATPase (P-type) (TC 3.A.3) family. Type IIC subfamily. As to quaternary structure, the sodium/potassium-transporting ATPase is composed of a catalytic alpha subunit, an auxiliary non-catalytic beta subunit and an additional regulatory subunit. Interacts with regulatory subunit FXYD1. Interacts with regulatory subunit FXYD3. Interacts with SIK1. Interacts with SLC35G1 and STIM1. Interacts with CLN3; this interaction regulates the sodium/potassium-transporting ATPase complex localization at the plasma membrane. Interacts with SCN7A; activates ATP1A1 P-type sodium:potassium-exchanging transporter activity which indirectly signals to nearby neurons to regulate sodium homeostasis. In terms of processing, phosphorylation on Tyr-10 modulates pumping activity. Phosphorylation of Ser-943 by PKA modulates the response of ATP1A1 to PKC. Dephosphorylation by protein phosphatase 2A (PP2A) following increases in intracellular sodium, leading to increase catalytic activity. As to expression, expressed in endocardial endothelial cells.

Its subcellular location is the cell membrane. The protein localises to the basolateral cell membrane. The protein resides in the sarcolemma. It is found in the cell projection. It localises to the axon. Its subcellular location is the melanosome. The catalysed reaction is K(+)(out) + Na(+)(in) + ATP + H2O = K(+)(in) + Na(+)(out) + ADP + phosphate + H(+). Its function is as follows. This is the catalytic component of the active enzyme, which catalyzes the hydrolysis of ATP coupled with the exchange of sodium and potassium ions across the plasma membrane. This action creates the electrochemical gradient of sodium and potassium ions, providing the energy for active transport of various nutrients. Could also be part of an osmosensory signaling pathway that senses body-fluid sodium levels and controls salt intake behavior as well as voluntary water intake to regulate sodium homeostasis. In Oryctolagus cuniculus (Rabbit), this protein is Sodium/potassium-transporting ATPase subunit alpha-1 (ATP1A1).